The sequence spans 75 residues: DNA-directed RNA polymerase subunit omega (75 aa).

Belongs to the RNA polymerase subunit omega family. In terms of assembly, in cyanobacteria the RNAP catalytic core is composed of 2 alpha, 1 beta, 1 beta', 1 gamma and 1 omega subunit. When a sigma factor is associated with the core the holoenzyme is formed, which can initiate transcription.

The enzyme catalyses RNA(n) + a ribonucleoside 5'-triphosphate = RNA(n+1) + diphosphate. Promotes RNA polymerase assembly. Latches the N- and C-terminal regions of the beta' subunit thereby facilitating its interaction with the beta and alpha subunits. The polypeptide is DNA-directed RNA polymerase subunit omega (Prochlorococcus marinus (strain MIT 9313)).